Here is a 435-residue protein sequence, read N- to C-terminus: Asparagine--tRNA ligase (435 aa).

The protein belongs to the class-II aminoacyl-tRNA synthetase family. In terms of assembly, homodimer.

The protein localises to the cytoplasm. It catalyses the reaction tRNA(Asn) + L-asparagine + ATP = L-asparaginyl-tRNA(Asn) + AMP + diphosphate + H(+). In Leptospira interrogans serogroup Icterohaemorrhagiae serovar copenhageni (strain Fiocruz L1-130), this protein is Asparagine--tRNA ligase.